A 62-amino-acid polypeptide reads, in one-letter code: Defensin BmKDfsin4 (62 aa).

The first 24 residues, 1–24 (MKTIVLLFVLALVFCTLEMGIVEA), serve as a signal peptide directing secretion. 3 cysteine pairs are disulfide-bonded: Cys28-Cys49, Cys35-Cys57, and Cys39-Cys59.

It belongs to the invertebrate defensin family. Type 2 subfamily.

It is found in the secreted. In terms of biological role, dual-function peptide with antimicrobial and potassium channel-blocking activities. Shows inhibitory activity against Gram-positive bacteria such as S.aureus, B.subtilis, and M.luteus as well as methicillin-resistant S.aureus (MIC=0.1-20 uM). Does not act on bacteria by disrupting membranes. Also moderately inhibits Kv1.1/KCNA1 (25.2% inhibition at 1 uM), Kv1.2/KCNA2 (30.5% inhibition at 1 uM), and Kv1.3/KCNA3 potassium channels (IC(50)=510.2 nM, 61% inhibition at 1 uM). Inhibits potassium channels by interacting with the pore region. Does not show hemolytic activity. In vitro, dose-dependently decreases the production of Hepatitis B virus (HBV) DNA and HBV viral proteins in both culture medium and cell lysate. In Olivierus martensii (Manchurian scorpion), this protein is Defensin BmKDfsin4.